Reading from the N-terminus, the 512-residue chain is Protein SHC1 (512 aa).

Residues E101–A113 show a composition bias toward acidic residues. Disordered regions lie at residues E101–Q122 and D144–L165. Sel1-like repeat units follow at residues P318 to H353, I354 to H389, P390 to S429, and C433 to H470.

Belongs to the SKT5 family.

It localises to the cytoplasm. The protein localises to the cytoplasmic granule membrane. Required for the activation of chitin synthase III (CHS3) activity during the sporulation process. In Saccharomyces cerevisiae (strain YJM789) (Baker's yeast), this protein is Protein SHC1 (SHC1).